Consider the following 419-residue polypeptide: Gamma-glutamyl phosphate reductase (419 aa).

Belongs to the gamma-glutamyl phosphate reductase family.

The protein localises to the cytoplasm. It carries out the reaction L-glutamate 5-semialdehyde + phosphate + NADP(+) = L-glutamyl 5-phosphate + NADPH + H(+). It functions in the pathway amino-acid biosynthesis; L-proline biosynthesis; L-glutamate 5-semialdehyde from L-glutamate: step 2/2. Its function is as follows. Catalyzes the NADPH-dependent reduction of L-glutamate 5-phosphate into L-glutamate 5-semialdehyde and phosphate. The product spontaneously undergoes cyclization to form 1-pyrroline-5-carboxylate. The sequence is that of Gamma-glutamyl phosphate reductase from Marinomonas sp. (strain MWYL1).